We begin with the raw amino-acid sequence, 173 residues long: Mesencephalic astrocyte-derived neurotrophic factor homolog (173 aa).

The first 22 residues, 1–22, serve as a signal peptide directing secretion; the sequence is MKTTHLVLVLCFLAGVAQTTLA. Cystine bridges form between C28/C114, C31/C103, C61/C72, and C148/C151.

It belongs to the ARMET family.

The protein resides in the secreted. Required during the maturation of the embryonic nervous system for maintenance of neuronal and cuticular connectivity. Essential for maintenance of dopaminergic neurons and dopamine levels. This Drosophila persimilis (Fruit fly) protein is Mesencephalic astrocyte-derived neurotrophic factor homolog.